Reading from the N-terminus, the 132-residue chain is NADH-quinone oxidoreductase subunit A 2 (132 aa).

The next 3 membrane-spanning stretches (helical) occupy residues 10 to 30, 66 to 86, and 93 to 113; these read WALL…LGLG, LVAM…LWAV, and WAGF…LFYL.

It belongs to the complex I subunit 3 family. In terms of assembly, NDH-1 is composed of 13 different subunits. Subunits NuoA, H, J, K, L, M, N constitute the membrane sector of the complex.

It is found in the cell inner membrane. The enzyme catalyses a quinone + NADH + 5 H(+)(in) = a quinol + NAD(+) + 4 H(+)(out). NDH-1 shuttles electrons from NADH, via FMN and iron-sulfur (Fe-S) centers, to quinones in the respiratory chain. The immediate electron acceptor for the enzyme in this species is believed to be ubiquinone. Couples the redox reaction to proton translocation (for every two electrons transferred, four hydrogen ions are translocated across the cytoplasmic membrane), and thus conserves the redox energy in a proton gradient. In Pseudomonas aeruginosa (strain UCBPP-PA14), this protein is NADH-quinone oxidoreductase subunit A 2.